Consider the following 252-residue polypeptide: Small capsomere-interacting protein (252 aa).

The segment at 69–252 is disordered; that stretch reads NKKRSGGPEK…APRGKLGKGR (184 aa). Positions 83 to 93 are enriched in low complexity; sequence ANPGAGPQNAP. Positions 94–109 are enriched in gly residues; it reads GCGGGGSGSGGSGPPG. Positions 182–192 are enriched in pro residues; that stretch reads PPAPPPLPQVP. Polar residues predominate over residues 213–237; sequence LPQQLGTAGSDNSGGQASSPGSQNP.

The protein belongs to the herpesviridae small capsomere-interacting protein family. As to quaternary structure, interacts with the major capsid protein/MCP.

It is found in the virion. The protein resides in the host nucleus. Its function is as follows. Participates in the assembly of the infectious particles by decorating the outer surface of the capsid shell and thus forming a layer between the capsid and the tegument. Complexes composed of the major capsid protein and small capsomere-interacting protein/SCP assemble together in the host cytoplasm and are translocated to the nucleus, where they accumulate and participate in capsid assembly. This chain is Small capsomere-interacting protein, found in Connochaetes taurinus (Blue wildebeest).